The following is a 192-amino-acid chain: dTTP/UTP pyrophosphatase (192 aa).

Catalysis depends on Asp-75, which acts as the Proton acceptor.

It belongs to the Maf family. YhdE subfamily. It depends on a divalent metal cation as a cofactor.

It is found in the cytoplasm. It catalyses the reaction dTTP + H2O = dTMP + diphosphate + H(+). The enzyme catalyses UTP + H2O = UMP + diphosphate + H(+). Its function is as follows. Nucleoside triphosphate pyrophosphatase that hydrolyzes dTTP and UTP. May have a dual role in cell division arrest and in preventing the incorporation of modified nucleotides into cellular nucleic acids. This is dTTP/UTP pyrophosphatase from Pelodictyon phaeoclathratiforme (strain DSM 5477 / BU-1).